Consider the following 363-residue polypeptide: DNA replication and repair protein RecF (363 aa).

30–37 provides a ligand contact to ATP; the sequence is GDNAQGKT.

The protein belongs to the RecF family.

It localises to the cytoplasm. In terms of biological role, the RecF protein is involved in DNA metabolism; it is required for DNA replication and normal SOS inducibility. RecF binds preferentially to single-stranded, linear DNA. It also seems to bind ATP. In Lachnospira eligens (strain ATCC 27750 / DSM 3376 / VPI C15-48 / C15-B4) (Eubacterium eligens), this protein is DNA replication and repair protein RecF.